A 457-amino-acid polypeptide reads, in one-letter code: Siroheme synthase (457 aa).

The interval 1–204 is precorrin-2 dehydrogenase /sirohydrochlorin ferrochelatase; the sequence is MDHLPIFCQL…ADEKAVNATT (204 aa). NAD(+) contacts are provided by residues 22-23 and 43-44; these read DV and LT. S128 carries the post-translational modification Phosphoserine. Residues 216–457 are uroporphyrinogen-III C-methyltransferase; that stretch reads GEVVLVGAGP…RDKLNWFSSH (242 aa). P225 lines the S-adenosyl-L-methionine pocket. D248 serves as the catalytic Proton acceptor. K270 (proton donor) is an active-site residue. S-adenosyl-L-methionine contacts are provided by residues 301–303, I306, 331–332, M382, and G411; these read GGD and TA.

The protein in the N-terminal section; belongs to the precorrin-2 dehydrogenase / sirohydrochlorin ferrochelatase family. In the C-terminal section; belongs to the precorrin methyltransferase family.

The enzyme catalyses uroporphyrinogen III + 2 S-adenosyl-L-methionine = precorrin-2 + 2 S-adenosyl-L-homocysteine + H(+). It carries out the reaction precorrin-2 + NAD(+) = sirohydrochlorin + NADH + 2 H(+). The catalysed reaction is siroheme + 2 H(+) = sirohydrochlorin + Fe(2+). The protein operates within cofactor biosynthesis; adenosylcobalamin biosynthesis; precorrin-2 from uroporphyrinogen III: step 1/1. It participates in cofactor biosynthesis; adenosylcobalamin biosynthesis; sirohydrochlorin from precorrin-2: step 1/1. Its pathway is porphyrin-containing compound metabolism; siroheme biosynthesis; precorrin-2 from uroporphyrinogen III: step 1/1. It functions in the pathway porphyrin-containing compound metabolism; siroheme biosynthesis; siroheme from sirohydrochlorin: step 1/1. The protein operates within porphyrin-containing compound metabolism; siroheme biosynthesis; sirohydrochlorin from precorrin-2: step 1/1. In terms of biological role, multifunctional enzyme that catalyzes the SAM-dependent methylations of uroporphyrinogen III at position C-2 and C-7 to form precorrin-2 via precorrin-1. Then it catalyzes the NAD-dependent ring dehydrogenation of precorrin-2 to yield sirohydrochlorin. Finally, it catalyzes the ferrochelation of sirohydrochlorin to yield siroheme. This Salmonella arizonae (strain ATCC BAA-731 / CDC346-86 / RSK2980) protein is Siroheme synthase.